The following is a 439-amino-acid chain: ATP-dependent protease ATPase subunit HslU (439 aa).

ATP-binding positions include Ile-17, 59 to 64 (GVGKTE), Asp-251, Glu-317, and Arg-389.

The protein belongs to the ClpX chaperone family. HslU subfamily. In terms of assembly, a double ring-shaped homohexamer of HslV is capped on each side by a ring-shaped HslU homohexamer. The assembly of the HslU/HslV complex is dependent on binding of ATP.

The protein localises to the cytoplasm. In terms of biological role, ATPase subunit of a proteasome-like degradation complex; this subunit has chaperone activity. The binding of ATP and its subsequent hydrolysis by HslU are essential for unfolding of protein substrates subsequently hydrolyzed by HslV. HslU recognizes the N-terminal part of its protein substrates and unfolds these before they are guided to HslV for hydrolysis. The chain is ATP-dependent protease ATPase subunit HslU from Campylobacter jejuni subsp. jejuni serotype O:2 (strain ATCC 700819 / NCTC 11168).